A 243-amino-acid chain; its full sequence is Pyridoxine 5'-phosphate synthase (243 aa).

Asn9 is a binding site for 3-amino-2-oxopropyl phosphate. Position 11 to 12 (11 to 12) interacts with 1-deoxy-D-xylulose 5-phosphate; it reads DH. Arg20 is a binding site for 3-amino-2-oxopropyl phosphate. His45 functions as the Proton acceptor in the catalytic mechanism. 2 residues coordinate 1-deoxy-D-xylulose 5-phosphate: Arg47 and His52. Glu72 serves as the catalytic Proton acceptor. Thr102 is a 1-deoxy-D-xylulose 5-phosphate binding site. Residue His193 is the Proton donor of the active site. Residues Gly194 and 215-216 each bind 3-amino-2-oxopropyl phosphate; that span reads GH.

The protein belongs to the PNP synthase family. As to quaternary structure, homooctamer; tetramer of dimers.

It localises to the cytoplasm. The enzyme catalyses 3-amino-2-oxopropyl phosphate + 1-deoxy-D-xylulose 5-phosphate = pyridoxine 5'-phosphate + phosphate + 2 H2O + H(+). The protein operates within cofactor biosynthesis; pyridoxine 5'-phosphate biosynthesis; pyridoxine 5'-phosphate from D-erythrose 4-phosphate: step 5/5. Functionally, catalyzes the complicated ring closure reaction between the two acyclic compounds 1-deoxy-D-xylulose-5-phosphate (DXP) and 3-amino-2-oxopropyl phosphate (1-amino-acetone-3-phosphate or AAP) to form pyridoxine 5'-phosphate (PNP) and inorganic phosphate. This Vibrio cholerae serotype O1 (strain ATCC 39315 / El Tor Inaba N16961) protein is Pyridoxine 5'-phosphate synthase.